The following is a 175-amino-acid chain: Epididymal-specific lipocalin-8 (175 aa).

Positions 1–25 (MPGAAEALPTVTVTLVAGAVPPASG) are cleaved as a signal peptide. N-linked (GlcNAc...) asparagine glycosylation is found at N66 and N74. A disulfide bridge connects residues C79 and C166.

The protein belongs to the calycin superfamily. Lipocalin family.

The protein resides in the secreted. May play a role in male fertility. May act as a retinoid carrier protein within the epididymis. The protein is Epididymal-specific lipocalin-8 (LCN8) of Homo sapiens (Human).